Reading from the N-terminus, the 326-residue chain is Septum site-determining protein minD homolog, chloroplastic (326 aa).

The transit peptide at 1–62 directs the protein to the chloroplast; the sequence is MASLRLFSTN…LAGETPRIVV (62 aa). An ATP-binding site is contributed by 67–74; that stretch reads KGGVGKTT.

This sequence belongs to the ParA family. MinD subfamily. Homodimer. Interacts with MINE1. Binds to ARC3. Interacts with MCD1. Interacts with CDP1/PARC6.

It is found in the plastid. The protein localises to the chloroplast inner membrane. Stimulated ATPase activity by MINE1. Together with ARC3 and MCD1, regulates FtsZ ring positioning in chloroplasts in an ARC6-dependent manner. Calcium-dependent ATPase required for the correct placement of the plastid division site. Inhibits FtsZ filament and ring formation in the plastid. Mediates inhibition of plastid division. In cooperation with MINE1, prevents FtsZ ring formation anywhere outside of the mid-plastids. This Arabidopsis thaliana (Mouse-ear cress) protein is Septum site-determining protein minD homolog, chloroplastic.